Here is a 122-residue protein sequence, read N- to C-terminus: Protein translocase subunit SecE (122 aa).

A run of 3 helical transmembrane segments spans residues L14 to F34, P38 to L58, and L93 to L113.

This sequence belongs to the SecE/SEC61-gamma family. As to quaternary structure, component of the Sec protein translocase complex. Heterotrimer consisting of SecY, SecE and SecG subunits. The heterotrimers can form oligomers, although 1 heterotrimer is thought to be able to translocate proteins. Interacts with the ribosome. Interacts with SecDF, and other proteins may be involved. Interacts with SecA.

It localises to the cell inner membrane. Its function is as follows. Essential subunit of the Sec protein translocation channel SecYEG. Clamps together the 2 halves of SecY. May contact the channel plug during translocation. This Pseudomonas aeruginosa (strain ATCC 15692 / DSM 22644 / CIP 104116 / JCM 14847 / LMG 12228 / 1C / PRS 101 / PAO1) protein is Protein translocase subunit SecE.